Reading from the N-terminus, the 299-residue chain is Protoheme IX farnesyltransferase (299 aa).

9 consecutive transmembrane segments (helical) span residues 25-45 (VVVL…RAGV), 47-67 (WTVL…AAAV), 95-115 (LAAL…LLTF), 119-139 (LAAW…TGFL), 147-167 (IVIG…AVSG), 173-193 (PLLL…ALAI), 218-238 (LHIL…YAIH), 243-263 (LYLL…WALY), and 279-299 (IRYL…PLTL).

It belongs to the UbiA prenyltransferase family. Protoheme IX farnesyltransferase subfamily.

It localises to the cell inner membrane. The catalysed reaction is heme b + (2E,6E)-farnesyl diphosphate + H2O = Fe(II)-heme o + diphosphate. It functions in the pathway porphyrin-containing compound metabolism; heme O biosynthesis; heme O from protoheme: step 1/1. In terms of biological role, converts heme B (protoheme IX) to heme O by substitution of the vinyl group on carbon 2 of heme B porphyrin ring with a hydroxyethyl farnesyl side group. The polypeptide is Protoheme IX farnesyltransferase (Azotobacter vinelandii (strain DJ / ATCC BAA-1303)).